A 466-amino-acid chain; its full sequence is tRNA modification GTPase MnmE (466 aa).

Positions 22, 87, and 126 each coordinate (6S)-5-formyl-5,6,7,8-tetrahydrofolate. The region spanning 222–382 (GWRTVIVGRP…LTELIRRMVY (161 aa)) is the TrmE-type G domain. Position 232 (asparagine 232) interacts with K(+). GTP contacts are provided by residues 232-237 (NVGKSS), 251-257 (TEIPGTT), and 276-279 (DTAG). Serine 236 is a Mg(2+) binding site. K(+)-binding residues include threonine 251, isoleucine 253, and threonine 256. Threonine 257 lines the Mg(2+) pocket. Lysine 466 lines the (6S)-5-formyl-5,6,7,8-tetrahydrofolate pocket.

This sequence belongs to the TRAFAC class TrmE-Era-EngA-EngB-Septin-like GTPase superfamily. TrmE GTPase family. Homodimer. Heterotetramer of two MnmE and two MnmG subunits. K(+) serves as cofactor.

Its subcellular location is the cytoplasm. Its function is as follows. Exhibits a very high intrinsic GTPase hydrolysis rate. Involved in the addition of a carboxymethylaminomethyl (cmnm) group at the wobble position (U34) of certain tRNAs, forming tRNA-cmnm(5)s(2)U34. The sequence is that of tRNA modification GTPase MnmE from Heliobacterium modesticaldum (strain ATCC 51547 / Ice1).